The chain runs to 224 residues: Ribonuclease 3 (224 aa).

The RNase III domain maps to 4–127; that stretch reads IEKLERSLTY…IIGAIHLEAG (124 aa). Glutamate 40 provides a ligand contact to Mg(2+). Residue aspartate 44 is part of the active site. Residues aspartate 113 and glutamate 116 each contribute to the Mg(2+) site. Glutamate 116 is an active-site residue. A DRBM domain is found at 154–223; it reads DYKTKLQEIT…AKIALEKLGA (70 aa).

Belongs to the ribonuclease III family. As to quaternary structure, homodimer. It depends on Mg(2+) as a cofactor.

It localises to the cytoplasm. It carries out the reaction Endonucleolytic cleavage to 5'-phosphomonoester.. In terms of biological role, digests double-stranded RNA. Involved in the processing of primary rRNA transcript to yield the immediate precursors to the large and small rRNAs (23S and 16S). Processes some mRNAs, and tRNAs when they are encoded in the rRNA operon. Processes pre-crRNA and tracrRNA of type II CRISPR loci if present in the organism. The sequence is that of Ribonuclease 3 from Campylobacter jejuni (strain RM1221).